The primary structure comprises 173 residues: Monothiol glutaredoxin-S14, chloroplastic (173 aa).

The N-terminal 63 residues, 1 to 63 (MALRSVKTPT…KLKPTKFRCS (63 aa)), are a transit peptide targeting the chloroplast. One can recognise a Glutaredoxin domain in the interval 72 to 173 (KDTLEKLVNS…QEEVEKAMCS (102 aa)). Position 89 (Lys-89) interacts with glutathione. [2Fe-2S] cluster is bound by residues Cys-97 and Phe-99. Cys-97 carries the post-translational modification S-glutathionyl cysteine. Residues 97–100 (CGFS) are required for CAX1 activation. Residues Arg-126 and Lys-130 each contribute to the glutathione site. The required for CAX1 activation stretch occupies residues 133-137 (SNWPT). Residues Phe-138 and 151 to 152 (CD) each bind glutathione.

Belongs to the glutaredoxin family. CGFS subfamily. In terms of assembly, [2Fe-2S]-bridged holo-homodimer. Interacts with N-terminal part of CAX1 in yeast. Interacts in vitro with SUFE1, BOLA1, BOLA2 and BOLA4. Interacts in vivo only with SUFE1, BOLA1 and BOLA4. Interacts with SBP1. As to expression, highly expressed in leaves, at intermediate levels in stems and at lower levels in roots and flowers.

The protein localises to the plastid. It is found in the chloroplast. May only reduce GSH-thiol disulfides, but not protein disulfides (Potential). Probably involved in the regulation of the redox state of the BOLA proteins (Potential). May act as Fe-S cluster donors to Fe-S cluster-requiring proteins. May protect cells against protein oxidative damage. May regulate CAX cation transporters. The GRXS14-BOLA1 heterodimer binds a labile, oxygen sensitive Fe-S cluster. This is Monothiol glutaredoxin-S14, chloroplastic from Arabidopsis thaliana (Mouse-ear cress).